The following is a 132-amino-acid chain: Small ribosomal subunit protein uS8c (132 aa).

The protein belongs to the universal ribosomal protein uS8 family. In terms of assembly, part of the 30S ribosomal subunit.

Its subcellular location is the plastid. It localises to the chloroplast. Its function is as follows. One of the primary rRNA binding proteins, it binds directly to 16S rRNA central domain where it helps coordinate assembly of the platform of the 30S subunit. This chain is Small ribosomal subunit protein uS8c (rps8), found in Adiantum capillus-veneris (Maidenhair fern).